Here is a 225-residue protein sequence, read N- to C-terminus: Cardiotrophin-like cytokine factor 1 (225 aa).

The signal sequence occupies residues 1 to 27 (MDLRAGDSWGMLACLCTVLWHLPAVPA). Asn-29 carries an N-linked (GlcNAc...) asparagine glycan.

Belongs to the IL-6 superfamily. As to quaternary structure, forms a heteromeric complex with cardiotrophin-like cytokine CRLF1/CLF-1; the CRLF1-CLCF1 complex is a ligand for the ciliary neurotrophic factor receptor/CNTFR. The CRLF1-CLCF1 heterodimer binds SORL1 (via N-terminal ectodomain); within this complex, the interaction is mediated predominantly by the CRLF1 moiety. The tripartite signaling complex formed by CRLF1, CLCF1 and CNTFR also binds SORL1. Expressed predominantly in lymph nodes, spleen, peripheral blood lymphocytes, bone marrow, and fetal liver.

The protein resides in the secreted. Its function is as follows. In complex with CRLF1, forms a heterodimeric neurotropic cytokine that plays a crucial role during neuronal development. Also stimulates B-cells. Binds to and activates the ILST/gp130 receptor. This chain is Cardiotrophin-like cytokine factor 1 (CLCF1), found in Homo sapiens (Human).